The chain runs to 966 residues: LRR receptor-like serine/threonine-protein kinase ERL1 (966 aa).

Residues 1-25 form the signal peptide; it reads MKEKMQRMVLSLAMVGFMVFGVASA. Residues 26–582 lie on the Extracellular side of the membrane; sequence MNNEGKALMA…PLPKSRVFSR (557 aa). The stretch at 40-63 is one LRR 1 repeat; the sequence is FSNLVNMLLDWDDVHNSDLCSWRG. N-linked (GlcNAc...) asparagine glycans are attached at residues N68 and N77. LRR repeat units lie at residues 75 to 94, 95 to 118, 120 to 142, 143 to 166, 168 to 190, 192 to 214, 215 to 238, 239 to 261, 262 to 285, 286 to 311, 313 to 333, 334 to 357, 359 to 381, 383 to 404, 405 to 429, 431 to 453, 454 to 476, 478 to 500, 501 to 525, and 527 to 550; these read SLNL…IGDL, RNLQ…IGNC, SLVY…ISKL, KQLE…LTQI, NLKR…LYWN, VLQY…MCQL, TGLW…IGNC, TSFQ…NIGF, LQVA…IGLM, QALA…NLSF, GKLY…LGNM, SRLS…LGKL, QLFE…ISSC, ALNQ…AFRN, LGSL…LGHI, NLDK…LGDL, EHLL…EFGN, RSIQ…ELGQ, LQNL…LTNC, and TLVN…NFSR. 2 N-linked (GlcNAc...) asparagine glycosylation sites follow: N226 and N237. Residues N308 and N332 are each glycosylated (N-linked (GlcNAc...) asparagine). N-linked (GlcNAc...) asparagine glycosylation occurs at N377. N412, N441, and N460 each carry an N-linked (GlcNAc...) asparagine glycan. 3 N-linked (GlcNAc...) asparagine glycosylation sites follow: N532, N537, and N547. Residues 583–603 traverse the membrane as a helical segment; it reads GALICIVLGVITLLCMIFLAV. Residues 604-966 are Cytoplasmic-facing; sequence YKSMQQKKIL…FREVISKSSI (363 aa). Residues T637 and T645 each carry the phosphothreonine modification. A Protein kinase domain is found at 648 to 921; that stretch reads LNEKFIIGYG…RVLLSLVPSL (274 aa). Residues 654–662 and K676 contribute to the ATP site; that span reads IGYGASSTV. 2 positions are modified to phosphotyrosine: Y721 and Y760. Residue D773 is the Proton acceptor of the active site. At Y815 the chain carries Phosphotyrosine. T823 is modified (phosphothreonine).

It belongs to the protein kinase superfamily. Ser/Thr protein kinase family. Homodimer and heterodimer with ERECTA and TMM. Interacts with EPF1 and EPF2. Interacts with SERK1, SERK2, SERK3/BAK1 and SERK4 in a EPF1-induced manner. As to expression, mostly expressed in developing organs, including bud clusters, flowers, siliques and young rosettes. Also detected in mature aboveground organs, such as leaves, stems and pedicels, but barely in roots.

It localises to the cell membrane. It carries out the reaction L-seryl-[protein] + ATP = O-phospho-L-seryl-[protein] + ADP + H(+). The catalysed reaction is L-threonyl-[protein] + ATP = O-phospho-L-threonyl-[protein] + ADP + H(+). Functionally, receptor kinase that regulates inflorescence architecture and organ shape as well as stomatal patterning, including density and clustering, together with ER and ERL2. Redundantly involved with ER in procambial development regulation. Forms a functional ligand-receptor pair with EPF1 (AC Q8S8I4). Forms a constitutive complex with TMM involved in the recognition of the stomatal regulatory peptides EPF1, EPF2 and EPFL9/STOMAGEN. In Arabidopsis thaliana (Mouse-ear cress), this protein is LRR receptor-like serine/threonine-protein kinase ERL1.